Reading from the N-terminus, the 202-residue chain is Superoxide dismutase [Fe] (202 aa).

4 residues coordinate Fe cation: His-27, His-82, Asp-164, and His-168.

Belongs to the iron/manganese superoxide dismutase family. As to quaternary structure, homodimer. Fe cation serves as cofactor.

The enzyme catalyses 2 superoxide + 2 H(+) = H2O2 + O2. Its function is as follows. Destroys superoxide anion radicals which are normally produced within the cells and which are toxic to biological systems. In Enterococcus faecalis (strain ATCC 700802 / V583), this protein is Superoxide dismutase [Fe] (sodA).